Reading from the N-terminus, the 300-residue chain is O-methyltransferase phiE (300 aa).

S-adenosyl-L-methionine contacts are provided by residues 130 to 131 (DL) and 157 to 158 (DV).

The protein belongs to the class I-like SAM-binding methyltransferase superfamily. As to quaternary structure, homodimer.

It carries out the reaction phomoidride A + S-adenosyl-L-methionine = (-)-phomoidride B + methanol + S-adenosyl-L-homocysteine + H(+). It participates in secondary metabolite biosynthesis. In terms of biological role, O-methyltransferase; part of the gene cluster that mediates the biosynthesis of the antihypercholesterolemic agents phomoidrides which are dimeric anhydrides. Within the pathway, phiE catalyzes the acetalization reaction that converts phomoidride A to phomoidride B. The pathway begins with the highly reducing polyketide synthase phiA that catalyzes the formation of a C12-fatty acyl-ACP, starting from one acetate and 5 malonate units. The hydrolase phiM is involved in the release of the C12-fatty acyl chain from phiA. The alkylcitrate synthase (ACS) phiJ and the alkylcitrate dehydratase (ACDH) phiI then give rise to decarboxylated monomeric anhydrides by coupling the C12-fatty acyl chain with oxalacetic acid. The cyclase phiC is responsible for the dimerization of the monomeric anhydrides which leads to the production of prephomoidride that contains the characteristic bicyclo[4.3.1]deca-1,6-diene system of phomoidrides. Iterative oxidation catalyzed by the alpha-ketoglutarate-dependent dioxygenase phiK produced then phomoidride A. Finally, the methyltransferase phiE converts phomoidride A to phomoidride B via an acetalization reaction. The phosphatidylethanolamine-binding protein phiB and phiN are not essential for dimerization and their functions have still to be determined. The protein is O-methyltransferase phiE of Fungal sp. (strain ATCC 74256).